The chain runs to 259 residues: Leucyl/phenylalanyl-tRNA--protein transferase (259 aa).

The protein belongs to the L/F-transferase family.

The protein localises to the cytoplasm. It carries out the reaction N-terminal L-lysyl-[protein] + L-leucyl-tRNA(Leu) = N-terminal L-leucyl-L-lysyl-[protein] + tRNA(Leu) + H(+). The catalysed reaction is N-terminal L-arginyl-[protein] + L-leucyl-tRNA(Leu) = N-terminal L-leucyl-L-arginyl-[protein] + tRNA(Leu) + H(+). The enzyme catalyses L-phenylalanyl-tRNA(Phe) + an N-terminal L-alpha-aminoacyl-[protein] = an N-terminal L-phenylalanyl-L-alpha-aminoacyl-[protein] + tRNA(Phe). Functions in the N-end rule pathway of protein degradation where it conjugates Leu, Phe and, less efficiently, Met from aminoacyl-tRNAs to the N-termini of proteins containing an N-terminal arginine or lysine. This is Leucyl/phenylalanyl-tRNA--protein transferase from Teredinibacter turnerae (strain ATCC 39867 / T7901).